Here is a 469-residue protein sequence, read N- to C-terminus: Neuraminidase (469 aa).

Residues Met-1–Thr-9 are Intravirion-facing. Residues Ile-10–Val-30 form a helical membrane-spanning segment. The interval Gly-11 to Val-33 is involved in apical transport and lipid raft association. The Virion surface segment spans residues Thr-31–Ile-469. The tract at residues His-36–Ser-88 is hypervariable stalk region. 4 N-linked (GlcNAc...) asparagine; by host glycosylation sites follow: Asn-61, Asn-69, Asn-70, and Asn-86. The interval Gln-91–Ile-469 is head of neuraminidase. Cystine bridges form between Cys-92–Cys-417, Cys-124–Cys-129, Cys-183–Cys-230, Cys-232–Cys-237, Cys-278–Cys-291, Cys-280–Cys-289, Cys-318–Cys-337, and Cys-421–Cys-447. Substrate is bound at residue Arg-118. N-linked (GlcNAc...) asparagine; by host glycosylation occurs at Asn-146. Residue Asp-151 is the Proton donor/acceptor of the active site. Arg-152 is a substrate binding site. 2 N-linked (GlcNAc...) asparagine; by host glycosylation sites follow: Asn-200 and Asn-234. Glu-276–Glu-277 contributes to the substrate binding site. Arg-292 is a substrate binding site. 3 residues coordinate Ca(2+): Asp-293, Gly-297, and Asp-324. The interval Asp-324–Lys-350 is disordered. Residues Ser-333 to Asn-342 show a composition bias toward low complexity. Arg-371 serves as a coordination point for substrate. Asn-402 is a glycosylation site (N-linked (GlcNAc...) asparagine; by host). Tyr-406 (nucleophile) is an active-site residue.

This sequence belongs to the glycosyl hydrolase 34 family. In terms of assembly, homotetramer. Ca(2+) serves as cofactor. In terms of processing, N-glycosylated.

It is found in the virion membrane. Its subcellular location is the host apical cell membrane. It carries out the reaction Hydrolysis of alpha-(2-&gt;3)-, alpha-(2-&gt;6)-, alpha-(2-&gt;8)- glycosidic linkages of terminal sialic acid residues in oligosaccharides, glycoproteins, glycolipids, colominic acid and synthetic substrates.. Inhibited by the neuraminidase inhibitors zanamivir (Relenza) and oseltamivir (Tamiflu). These drugs interfere with the release of progeny virus from infected cells and are effective against all influenza strains. Resistance to neuraminidase inhibitors is quite rare. Catalyzes the removal of terminal sialic acid residues from viral and cellular glycoconjugates. Cleaves off the terminal sialic acids on the glycosylated HA during virus budding to facilitate virus release. Additionally helps virus spread through the circulation by further removing sialic acids from the cell surface. These cleavages prevent self-aggregation and ensure the efficient spread of the progeny virus from cell to cell. Otherwise, infection would be limited to one round of replication. Described as a receptor-destroying enzyme because it cleaves a terminal sialic acid from the cellular receptors. May facilitate viral invasion of the upper airways by cleaving the sialic acid moieties on the mucin of the airway epithelial cells. Likely to plays a role in the budding process through its association with lipid rafts during intracellular transport. May additionally display a raft-association independent effect on budding. Plays a role in the determination of host range restriction on replication and virulence. Sialidase activity in late endosome/lysosome traffic seems to enhance virus replication. This is Neuraminidase from Aves (whales).